We begin with the raw amino-acid sequence, 178 residues long: Peptide deformylase (178 aa).

Residues Cys-102 and His-144 each coordinate Fe cation. The active site involves Glu-145. Position 148 (His-148) interacts with Fe cation.

It belongs to the polypeptide deformylase family. Requires Fe(2+) as cofactor.

It carries out the reaction N-terminal N-formyl-L-methionyl-[peptide] + H2O = N-terminal L-methionyl-[peptide] + formate. In terms of biological role, removes the formyl group from the N-terminal Met of newly synthesized proteins. Requires at least a dipeptide for an efficient rate of reaction. N-terminal L-methionine is a prerequisite for activity but the enzyme has broad specificity at other positions. The protein is Peptide deformylase of Leptospira borgpetersenii serovar Hardjo-bovis (strain JB197).